The primary structure comprises 340 residues: MSFIDEAKIYLKAGNGGDGCSSFRREKFIEFGGPDGGNGGNGGNIIFYTSHHINTLLYFRYKQHIKAENGNPGSSKKKSGSSGKDVIIKVPIGTQLYDEDGMLITDLNEENQKFIAAHGGKGGIGNANYKTSTNRAPRHFTFGKRGEEKHIILKLKIISDVGIIGLPNAGKSSFLASCTNSKTKIADYPFTTLEPHLGVAFIDNTELVLADIPGLIPGAHLGHGIGDKFLKHIERCSILLHIIDCTLDNIIESYECIRKELSFYNKELSNKTEFIVLNKSDLLDKKEINQKKQILSNHTKKEIFISSIKNNRYPILSTLIKQIHKKYTNTKPHIYDPFNI.

The region spanning 1-158 (MSFIDEAKIY…KHIILKLKII (158 aa)) is the Obg domain. The OBG-type G domain maps to 159 to 325 (SDVGIIGLPN…LSTLIKQIHK (167 aa)). GTP is bound by residues 165–172 (GLPNAGKS), 190–194 (FTTLE), 211–214 (DIPG), 278–281 (NKSD), and 306–308 (SSI). Mg(2+) is bound by residues serine 172 and threonine 192.

This sequence belongs to the TRAFAC class OBG-HflX-like GTPase superfamily. OBG GTPase family. As to quaternary structure, monomer. It depends on Mg(2+) as a cofactor.

The protein localises to the cytoplasm. Its function is as follows. An essential GTPase which binds GTP, GDP and possibly (p)ppGpp with moderate affinity, with high nucleotide exchange rates and a fairly low GTP hydrolysis rate. Plays a role in control of the cell cycle, stress response, ribosome biogenesis and in those bacteria that undergo differentiation, in morphogenesis control. This Ehrlichia canis (strain Jake) protein is GTPase Obg.